The following is a 206-amino-acid chain: Putative amino-acid transporter YggA (206 aa).

Transmembrane regions (helical) follow at residues 1-21 (MFATTLQGFTLGLAMIIPIGA), 37-57 (LLAATLCCLCDLILIGIGVFG), 65-85 (SPIGLALLTWGGVLFLCWFGI), 116-136 (LGVTLLNPHVYLDTLMLLGSF), 148-168 (FAAGAMLASLVWFYSLAFGAA), and 185-205 (TIVGLIMLGLALQLASGALLA).

Belongs to the LysE/ArgO transporter (TC 2.A.75) family.

The protein resides in the cell membrane. The sequence is that of Putative amino-acid transporter YggA (yggA) from Aeromonas salmonicida.